Reading from the N-terminus, the 142-residue chain is uncharacterized protein (142 aa).

This is an uncharacterized protein from Mycobacterium tuberculosis (strain CDC 1551 / Oshkosh).